Here is a 236-residue protein sequence, read N- to C-terminus: Adenosine 5'-phosphosulfate reductase 2 (236 aa).

Residues Cys122, Cys123, Cys205, and Cys208 each coordinate [4Fe-4S] cluster. Residues 216–236 (NDERAGRWAGREKTECGLHQE) form a disordered region. Cys231 acts as the Nucleophile; cysteine thiosulfonate intermediate in catalysis.

It belongs to the PAPS reductase family. CysH subfamily. The cofactor is [4Fe-4S] cluster.

The protein localises to the cytoplasm. It carries out the reaction [thioredoxin]-disulfide + sulfite + AMP + 2 H(+) = adenosine 5'-phosphosulfate + [thioredoxin]-dithiol. Its pathway is sulfur metabolism; hydrogen sulfide biosynthesis; sulfite from sulfate. In terms of biological role, catalyzes the formation of sulfite from adenosine 5'-phosphosulfate (APS) using thioredoxin as an electron donor. In Bacillus subtilis (strain 168), this protein is Adenosine 5'-phosphosulfate reductase 2.